The chain runs to 326 residues: Tagatose 1,6-diphosphate aldolase (326 aa).

Belongs to the aldolase LacD family.

The catalysed reaction is D-tagatofuranose 1,6-bisphosphate = D-glyceraldehyde 3-phosphate + dihydroxyacetone phosphate. The protein operates within carbohydrate metabolism; D-tagatose 6-phosphate degradation; D-glyceraldehyde 3-phosphate and glycerone phosphate from D-tagatose 6-phosphate: step 2/2. The chain is Tagatose 1,6-diphosphate aldolase from Staphylococcus aureus (strain MW2).